We begin with the raw amino-acid sequence, 59 residues long: Antitoxin Rv0909 (59 aa).

In terms of biological role, antitoxin component of a type II toxin-antitoxin (TA) system. Upon expression in M.smegmatis neutralizes the effect of cognate toxin Rv0910. In Mycobacterium tuberculosis (strain ATCC 25618 / H37Rv), this protein is Antitoxin Rv0909.